A 546-amino-acid polypeptide reads, in one-letter code: Chaperonin GroEL 1 (546 aa).

ATP is bound by residues 29-32 (TIGP), 86-90 (DGTTT), glycine 413, 477-479 (NAA), and aspartate 493. The segment at 523 to 546 (PAEPAPQDGHGHGHGHSHPQGPGF) is disordered.

This sequence belongs to the chaperonin (HSP60) family. In terms of assembly, forms a cylinder of 14 subunits composed of two heptameric rings stacked back-to-back. Interacts with the co-chaperonin GroES.

It localises to the cytoplasm. It catalyses the reaction ATP + H2O + a folded polypeptide = ADP + phosphate + an unfolded polypeptide.. Together with its co-chaperonin GroES, plays an essential role in assisting protein folding. The GroEL-GroES system forms a nano-cage that allows encapsulation of the non-native substrate proteins and provides a physical environment optimized to promote and accelerate protein folding. The polypeptide is Chaperonin GroEL 1 (Frankia casuarinae (strain DSM 45818 / CECT 9043 / HFP020203 / CcI3)).